The chain runs to 395 residues: Sensor protein DltS (395 aa).

Helical transmembrane passes span 9–29 (FVFL…AVSN) and 136–156 (FLIL…SLYL). One can recognise a Histidine kinase domain in the interval 177 to 387 (DASHELKTPI…RLEVQLPIDG (211 aa)). Position 180 is a phosphohistidine; by autocatalysis (His-180).

The protein resides in the cell membrane. It carries out the reaction ATP + protein L-histidine = ADP + protein N-phospho-L-histidine.. Functionally, member of the two-component regulatory system DltS/DltR. Regulates the expression of the dlt operon. Probably phosphorylates DltR. The polypeptide is Sensor protein DltS (dltS) (Streptococcus agalactiae serotype III (strain NEM316)).